Reading from the N-terminus, the 430-residue chain is Adenylosuccinate synthetase (430 aa).

GTP is bound by residues 12–18 (GDEGKGK) and 40–42 (GHT). D13 acts as the Proton acceptor in catalysis. Residues D13 and G40 each coordinate Mg(2+). IMP contacts are provided by residues 13–16 (DEGK), 38–41 (NAGH), T128, R142, Q223, T238, and R302. The active-site Proton donor is the H41. 298-304 (TTTGRPR) contacts substrate. Residues R304, 330–332 (SID), and 412–414 (SVG) contribute to the GTP site.

Belongs to the adenylosuccinate synthetase family. In terms of assembly, homodimer. Mg(2+) serves as cofactor.

The protein resides in the cytoplasm. It carries out the reaction IMP + L-aspartate + GTP = N(6)-(1,2-dicarboxyethyl)-AMP + GDP + phosphate + 2 H(+). Its pathway is purine metabolism; AMP biosynthesis via de novo pathway; AMP from IMP: step 1/2. Functionally, plays an important role in the de novo pathway of purine nucleotide biosynthesis. Catalyzes the first committed step in the biosynthesis of AMP from IMP. The polypeptide is Adenylosuccinate synthetase (Streptococcus pyogenes serotype M6 (strain ATCC BAA-946 / MGAS10394)).